A 127-amino-acid chain; its full sequence is DNA-directed RNA polymerase subunit omega (127 aa).

Belongs to the RNA polymerase subunit omega family. In terms of assembly, the RNAP catalytic core consists of 2 alpha, 1 beta, 1 beta' and 1 omega subunit. When a sigma factor is associated with the core the holoenzyme is formed, which can initiate transcription.

It carries out the reaction RNA(n) + a ribonucleoside 5'-triphosphate = RNA(n+1) + diphosphate. In terms of biological role, promotes RNA polymerase assembly. Latches the N- and C-terminal regions of the beta' subunit thereby facilitating its interaction with the beta and alpha subunits. This Rickettsia peacockii (strain Rustic) protein is DNA-directed RNA polymerase subunit omega.